We begin with the raw amino-acid sequence, 733 residues long: Photosystem I P700 chlorophyll a apoprotein A2 (733 aa).

8 helical membrane passes run 46–69 (IFASHFGHLAVIFLWTAGNLFHVA), 134–157 (LYLGSVGLLLLSCALLFAGWLHLQ), 174–198 (LNHHLSGLMGVSSLAWTGHLVHVAL), 272–290 (IAHHQLAIAFVFIIAGHMY), 329–352 (LHIQLGLALACLGVATSLTAQHMY), 368–394 (AALYTHHQYIAGFLMVGAFAHGAIFFV), 416–438 (AIISHLSWASLFLGFHVLGLYIH), and 516–534 (FLVHHAIALGLHVTTLILV). The [4Fe-4S] cluster site is built by cysteine 558 and cysteine 567. 2 helical membrane passes run 574–595 (AFYLAMFWMLNTIGWVTFYWHW) and 642–664 (LSVWAWMFLFGHLIWATGFMFLI). The chlorophyll a site is built by histidine 653, methionine 661, and tyrosine 669. Position 670 (tryptophan 670) interacts with phylloquinone. The helical transmembrane segment at 706–726 (LVGLVHFAVGYILTYAAFVIA) threads the bilayer.

It belongs to the PsaA/PsaB family. The PsaA/B heterodimer binds the P700 chlorophyll special pair and subsequent electron acceptors. PSI consists of a core antenna complex that captures photons, and an electron transfer chain that converts photonic excitation into a charge separation. The eukaryotic PSI reaction center is composed of at least 11 subunits. The cofactor is P700 is a chlorophyll a/chlorophyll a' dimer, A0 is one or more chlorophyll a, A1 is one or both phylloquinones and FX is a shared 4Fe-4S iron-sulfur center..

The protein resides in the plastid. The protein localises to the chloroplast thylakoid membrane. The enzyme catalyses reduced [plastocyanin] + hnu + oxidized [2Fe-2S]-[ferredoxin] = oxidized [plastocyanin] + reduced [2Fe-2S]-[ferredoxin]. In terms of biological role, psaA and PsaB bind P700, the primary electron donor of photosystem I (PSI), as well as the electron acceptors A0, A1 and FX. PSI is a plastocyanin/cytochrome c6-ferredoxin oxidoreductase, converting photonic excitation into a charge separation, which transfers an electron from the donor P700 chlorophyll pair to the spectroscopically characterized acceptors A0, A1, FX, FA and FB in turn. Oxidized P700 is reduced on the lumenal side of the thylakoid membrane by plastocyanin or cytochrome c6. This is Photosystem I P700 chlorophyll a apoprotein A2 from Trieres chinensis (Marine centric diatom).